The chain runs to 166 residues: UPF0304 protein VC_1871 (166 aa).

Belongs to the UPF0304 family.

The protein is UPF0304 protein VC_1871 of Vibrio cholerae serotype O1 (strain ATCC 39315 / El Tor Inaba N16961).